We begin with the raw amino-acid sequence, 258 residues long: Probable parvulin-type peptidyl-prolyl cis-trans isomerase (258 aa).

An N-terminal signal peptide occupies residues 1–19 (MKRIAMLAAACVIAVPAFA). The PpiC domain maps to 127-219 (KMEYKVRHIL…FGWHVIQVDD (93 aa)).

This sequence belongs to the PpiC/parvulin rotamase family.

It carries out the reaction [protein]-peptidylproline (omega=180) = [protein]-peptidylproline (omega=0). The sequence is that of Probable parvulin-type peptidyl-prolyl cis-trans isomerase from Bordetella parapertussis (strain 12822 / ATCC BAA-587 / NCTC 13253).